The primary structure comprises 264 residues: MSQHLFTAFILTALAGLSTGIGSLIAFVTKHTNKTFLSVSLGFSAGVMIYVSMIEIFPTAQTILTKAMDKKSGSWLTVLAFFGGILLIAIIDKLIPSEENPHEIKTIEEEDQKPTKLMRMGLMTAIAIGIHNFPEGLATFISGLQDASIAIPIVIAIAIHNIPEGIAVSVPIYQATGSKKKAFTYSFLSGLAEPLGAIIGWFLLMPIMNNIVYGAIFSAVAGIMVFISLDELLPAAEEYGKHHLAIYGVISGMLIMAVSLLLFI.

5 consecutive transmembrane segments (helical) span residues 8–28, 36–56, 75–95, 121–141, and 148–168; these read AFIL…IAFV, FLSV…MIEI, WLTV…DKLI, GLMT…ATFI, and SIAI…GIAV. Positions 132 and 135 each coordinate Fe(2+). 2 residues coordinate Zn(2+): Glu135 and His160. The Fe(2+) site is built by Asn161, Glu164, and Glu193. A Zn(2+)-binding site is contributed by Glu164. A run of 3 helical transmembrane segments spans residues 197 to 217, 219 to 239, and 244 to 264; these read AIIG…GAIF, AVAG…AEEY, and LAIY…LLFI.

This sequence belongs to the ZIP transporter (TC 2.A.5) family. ZupT subfamily.

The protein resides in the cell membrane. It catalyses the reaction Zn(2+)(in) = Zn(2+)(out). Functionally, mediates zinc uptake. May also transport other divalent cations. The chain is Zinc transporter ZupT from Streptococcus mutans serotype c (strain ATCC 700610 / UA159).